Reading from the N-terminus, the 329-residue chain is Aspartate carbamoyltransferase catalytic subunit (329 aa).

Carbamoyl phosphate contacts are provided by arginine 63 and threonine 64. Lysine 91 contributes to the L-aspartate binding site. Positions 113, 141, and 144 each coordinate carbamoyl phosphate. 2 residues coordinate L-aspartate: arginine 179 and arginine 234. Residues glycine 275 and proline 276 each contribute to the carbamoyl phosphate site.

It belongs to the aspartate/ornithine carbamoyltransferase superfamily. ATCase family. In terms of assembly, heterododecamer (2C3:3R2) of six catalytic PyrB chains organized as two trimers (C3), and six regulatory PyrI chains organized as three dimers (R2).

The enzyme catalyses carbamoyl phosphate + L-aspartate = N-carbamoyl-L-aspartate + phosphate + H(+). Its pathway is pyrimidine metabolism; UMP biosynthesis via de novo pathway; (S)-dihydroorotate from bicarbonate: step 2/3. In terms of biological role, catalyzes the condensation of carbamoyl phosphate and aspartate to form carbamoyl aspartate and inorganic phosphate, the committed step in the de novo pyrimidine nucleotide biosynthesis pathway. The polypeptide is Aspartate carbamoyltransferase catalytic subunit (Magnetococcus marinus (strain ATCC BAA-1437 / JCM 17883 / MC-1)).